The following is a 205-amino-acid chain: Holliday junction branch migration complex subunit RuvA (205 aa).

The interval 1–65 (MIAKLKGILD…EDRIHLFGFL (65 aa)) is domain I. Residues 66–144 (DNTEKVAFNM…NINTIANNTS (79 aa)) form a domain II region. The flexible linker stretch occupies residues 145-153 (LATLSTDSN). Positions 154–205 (THDNILSDAITALIALGISRAEATQILSDIYALSPSISVNELVRTALQRRAK) are domain III.

Belongs to the RuvA family. In terms of assembly, homotetramer. Forms an RuvA(8)-RuvB(12)-Holliday junction (HJ) complex. HJ DNA is sandwiched between 2 RuvA tetramers; dsDNA enters through RuvA and exits via RuvB. An RuvB hexamer assembles on each DNA strand where it exits the tetramer. Each RuvB hexamer is contacted by two RuvA subunits (via domain III) on 2 adjacent RuvB subunits; this complex drives branch migration. In the full resolvosome a probable DNA-RuvA(4)-RuvB(12)-RuvC(2) complex forms which resolves the HJ.

Its subcellular location is the cytoplasm. Its function is as follows. The RuvA-RuvB-RuvC complex processes Holliday junction (HJ) DNA during genetic recombination and DNA repair, while the RuvA-RuvB complex plays an important role in the rescue of blocked DNA replication forks via replication fork reversal (RFR). RuvA specifically binds to HJ cruciform DNA, conferring on it an open structure. The RuvB hexamer acts as an ATP-dependent pump, pulling dsDNA into and through the RuvAB complex. HJ branch migration allows RuvC to scan DNA until it finds its consensus sequence, where it cleaves and resolves the cruciform DNA. The protein is Holliday junction branch migration complex subunit RuvA of Orientia tsutsugamushi (strain Ikeda) (Rickettsia tsutsugamushi).